A 363-amino-acid polypeptide reads, in one-letter code: Peptide chain release factor 1 (363 aa).

Gln-237 bears the N5-methylglutamine mark. A compositionally biased stretch (basic and acidic residues) spans 287–299; the sequence is EQHKEQASTRKEL. Residues 287–306 form a disordered region; the sequence is EQHKEQASTRKELIGSGDRS.

It belongs to the prokaryotic/mitochondrial release factor family. In terms of processing, methylated by PrmC. Methylation increases the termination efficiency of RF1.

Its subcellular location is the cytoplasm. In terms of biological role, peptide chain release factor 1 directs the termination of translation in response to the peptide chain termination codons UAG and UAA. The sequence is that of Peptide chain release factor 1 from Ruthia magnifica subsp. Calyptogena magnifica.